Consider the following 308-residue polypeptide: D-alanine--D-alanine ligase (308 aa).

In terms of domain architecture, ATP-grasp spans 103–302; that stretch reads KFVFRAAGLP…YGELVSWMVE (200 aa). 130 to 184 provides a ligand contact to ATP; it reads MDPPYVIKPVSEGSSVGVFIVRAGDNRPPAELTSAEWNLGDEVMAERYIAGRELT. Mg(2+)-binding residues include aspartate 252, glutamate 269, and asparagine 271.

The protein belongs to the D-alanine--D-alanine ligase family. It depends on Mg(2+) as a cofactor. Requires Mn(2+) as cofactor.

It is found in the cytoplasm. The catalysed reaction is 2 D-alanine + ATP = D-alanyl-D-alanine + ADP + phosphate + H(+). It participates in cell wall biogenesis; peptidoglycan biosynthesis. Cell wall formation. This chain is D-alanine--D-alanine ligase, found in Parvibaculum lavamentivorans (strain DS-1 / DSM 13023 / NCIMB 13966).